The primary structure comprises 354 residues: 3-isopropylmalate dehydrogenase (354 aa).

76–87 (GPRWDGAKERPE) is a binding site for NAD(+). The substrate site is built by Arg94, Arg104, Arg130, and Asp215. The Mg(2+) site is built by Asp215, Asp239, and Asp243. 273 to 285 (GSAPDIAGKNKAN) serves as a coordination point for NAD(+).

Belongs to the isocitrate and isopropylmalate dehydrogenases family. LeuB type 1 subfamily. In terms of assembly, homodimer. Mg(2+) is required as a cofactor. The cofactor is Mn(2+).

Its subcellular location is the cytoplasm. It catalyses the reaction (2R,3S)-3-isopropylmalate + NAD(+) = 4-methyl-2-oxopentanoate + CO2 + NADH. The protein operates within amino-acid biosynthesis; L-leucine biosynthesis; L-leucine from 3-methyl-2-oxobutanoate: step 3/4. Its function is as follows. Catalyzes the oxidation of 3-carboxy-2-hydroxy-4-methylpentanoate (3-isopropylmalate) to 3-carboxy-4-methyl-2-oxopentanoate. The product decarboxylates to 4-methyl-2 oxopentanoate. In Bacillus thuringiensis subsp. konkukian (strain 97-27), this protein is 3-isopropylmalate dehydrogenase.